A 547-amino-acid chain; its full sequence is G protein-coupled receptor associated sorting protein 3 (547 aa).

Basic residues-rich tracts occupy residues 1–10 and 38–48; these read MTGTKNKTRA and AKTRAKAKAKT. The disordered stretch occupies residues 1-53; that stretch reads MTGTKNKTRAQAKTEKKPVTQAKAGAEREATGVVRPVAKTRAKAKAKTGSKTD.

This sequence belongs to the GPRASP family. Homodimer.

The protein localises to the cytoplasm. It is found in the nucleus. In terms of biological role, survival and differentiation promoting protein that plays a role in the regulation of neurosynaptogenesis. Induces phosphatase PP2A activity which results in APP dephosphorylation and inhibits BACE1-mediated processing of APP. The protein is G protein-coupled receptor associated sorting protein 3 (GPRASP3) of Macaca fascicularis (Crab-eating macaque).